A 424-amino-acid polypeptide reads, in one-letter code: Phosphomethylpyrimidine synthase (424 aa).

Substrate contacts are provided by residues Asn-66, Met-95, Tyr-124, His-163, 185-187 (SRG), 226-229 (DGMR), and Glu-265. His-269 is a Zn(2+) binding site. Phe-292 lines the substrate pocket. Zn(2+) is bound at residue His-333. Residues Cys-408, Cys-411, and Cys-415 each coordinate [4Fe-4S] cluster.

It belongs to the ThiC family. It depends on [4Fe-4S] cluster as a cofactor.

It carries out the reaction 5-amino-1-(5-phospho-beta-D-ribosyl)imidazole + S-adenosyl-L-methionine = 4-amino-2-methyl-5-(phosphooxymethyl)pyrimidine + CO + 5'-deoxyadenosine + formate + L-methionine + 3 H(+). It functions in the pathway cofactor biosynthesis; thiamine diphosphate biosynthesis. Functionally, catalyzes the synthesis of the hydroxymethylpyrimidine phosphate (HMP-P) moiety of thiamine from aminoimidazole ribotide (AIR) in a radical S-adenosyl-L-methionine (SAM)-dependent reaction. The protein is Phosphomethylpyrimidine synthase of Thermotoga petrophila (strain ATCC BAA-488 / DSM 13995 / JCM 10881 / RKU-1).